Here is a 340-residue protein sequence, read N- to C-terminus: ATP-dependent 6-phosphofructokinase (340 aa).

Glycine 11 is a binding site for ATP. 21–25 (RAVVR) serves as a coordination point for ADP. ATP-binding positions include 72 to 73 (RY) and 102 to 105 (GDGS). Aspartate 103 provides a ligand contact to Mg(2+). Residue 125–127 (TID) coordinates substrate. Catalysis depends on aspartate 127, which acts as the Proton acceptor. Arginine 154 is a binding site for ADP. Substrate contacts are provided by residues arginine 162 and 169–171 (MGR). Residues 185-187 (GAD), lysine 211, and 213-215 (KNH) each bind ADP. Substrate is bound by residues glutamate 222, arginine 244, and 250-253 (HIQR).

Belongs to the phosphofructokinase type A (PFKA) family. ATP-dependent PFK group I subfamily. Prokaryotic clade 'B1' sub-subfamily. Homotetramer. It depends on Mg(2+) as a cofactor.

It is found in the cytoplasm. It carries out the reaction beta-D-fructose 6-phosphate + ATP = beta-D-fructose 1,6-bisphosphate + ADP + H(+). Its pathway is carbohydrate degradation; glycolysis; D-glyceraldehyde 3-phosphate and glycerone phosphate from D-glucose: step 3/4. With respect to regulation, allosterically activated by ADP and other diphosphonucleosides, and allosterically inhibited by phosphoenolpyruvate. Catalyzes the phosphorylation of D-fructose 6-phosphate to fructose 1,6-bisphosphate by ATP, the first committing step of glycolysis. This is ATP-dependent 6-phosphofructokinase from Lactococcus lactis subsp. lactis (Streptococcus lactis).